A 198-amino-acid polypeptide reads, in one-letter code: MNELVVATKNKGKLADFQTLFTDRYIVKSLYDYPEVPEIIEDGDTFHENAAKKAETLAAYLQKLVIADDSGLLIDALGGKPGVYSARYAGEPKNDQANIDKVLSELDGVPTQKRTARFFCVIALAEPGKETIFAEGACEGRITEKPTGSNGFGYDPIFFVPSHGQTMAELSAGTKNQLSHRARALTALKETIEGVWPK.

8 to 13 contacts substrate; the sequence is TKNKGK. Asp69 acts as the Proton acceptor in catalysis. Asp69 provides a ligand contact to Mg(2+). Residues Ser70, 152–155, Lys175, and 180–181 contribute to the substrate site; these read FGYD and HR.

Belongs to the HAM1 NTPase family. In terms of assembly, homodimer. Mg(2+) serves as cofactor.

It catalyses the reaction XTP + H2O = XMP + diphosphate + H(+). The enzyme catalyses dITP + H2O = dIMP + diphosphate + H(+). The catalysed reaction is ITP + H2O = IMP + diphosphate + H(+). Functionally, pyrophosphatase that catalyzes the hydrolysis of nucleoside triphosphates to their monophosphate derivatives, with a high preference for the non-canonical purine nucleotides XTP (xanthosine triphosphate), dITP (deoxyinosine triphosphate) and ITP. Seems to function as a house-cleaning enzyme that removes non-canonical purine nucleotides from the nucleotide pool, thus preventing their incorporation into DNA/RNA and avoiding chromosomal lesions. This Shouchella clausii (strain KSM-K16) (Alkalihalobacillus clausii) protein is dITP/XTP pyrophosphatase.